Here is a 205-residue protein sequence, read N- to C-terminus: Dephospho-CoA kinase (205 aa).

The DPCK domain maps to 7-205 (IIGITGRIAS…QEIINYERFE (199 aa)). 15 to 20 (ASGKDA) contacts ATP.

It belongs to the CoaE family.

Its subcellular location is the cytoplasm. It carries out the reaction 3'-dephospho-CoA + ATP = ADP + CoA + H(+). It participates in cofactor biosynthesis; coenzyme A biosynthesis; CoA from (R)-pantothenate: step 5/5. Functionally, catalyzes the phosphorylation of the 3'-hydroxyl group of dephosphocoenzyme A to form coenzyme A. The polypeptide is Dephospho-CoA kinase (Borrelia garinii subsp. bavariensis (strain ATCC BAA-2496 / DSM 23469 / PBi) (Borreliella bavariensis)).